A 595-amino-acid chain; its full sequence is Alpha-1,3-galactosidase B (595 aa).

The N-terminal stretch at 1-22 is a signal peptide; it reads MKTILLFALSLLLSLSVSDVCA. PbH1 repeat units lie at residues 432–454, 455–477, and 488–541; these read TPEV…LFST, PKKT…LLCG, and CRDV…VIED.

This sequence belongs to the glycosyl hydrolase 110 family. B subfamily.

The catalysed reaction is Hydrolysis of terminal, non-reducing branched (1-&gt;3)-alpha-D-galactosidic residues, producing free D-galactose.. It carries out the reaction Hydrolysis of terminal, non-reducing linear (1-&gt;3)-alpha-D-galactosidic residues, producing free D-galactose.. The enzyme catalyses Hydrolysis of terminal, non-reducing alpha-D-galactose residues in alpha-D-galactosides, including galactose oligosaccharides, galactomannans and galactolipids.. In terms of biological role, alpha-galactosidase. Removes both branched alpha-1,3-linked galactose residues of blood group B antigens and linear alpha-1,3-linked galactose structures. This Bacteroides fragilis (strain ATCC 25285 / DSM 2151 / CCUG 4856 / JCM 11019 / LMG 10263 / NCTC 9343 / Onslow / VPI 2553 / EN-2) protein is Alpha-1,3-galactosidase B (glaB).